The following is a 260-amino-acid chain: MFDIGVNLTSVQFAKDYHQVVNRAKEAGVLGILITGTDADESLAAQTLAAEYPGYCWSTTGVHPHHASSWQDSVEQKIRTLAATASVVAIGECGLDFNRNFSTPAQQEVAFTAQLALAAELSLPVFLHCRDAHERFIDLLVPWLDKIPAAVVHCFTGNSDELDACLALGLSIGITGWVCDERRGLDLRALLPRIPVQQLLLETDAPYLLPRDLNPKPASRRNEPCFLPHIVQQVAAWRQEDPNWLGQKTDENARRVFRLV.

A divalent metal cation contacts are provided by glutamate 92, histidine 128, and histidine 153.

This sequence belongs to the metallo-dependent hydrolases superfamily. TatD-type hydrolase family. TatD subfamily. In terms of assembly, monomer. Requires Mg(2+) as cofactor.

The protein resides in the cytoplasm. Functionally, 3'-5' exonuclease that prefers single-stranded DNA and RNA. May play a role in the H(2)O(2)-induced DNA damage repair. The polypeptide is 3'-5' ssDNA/RNA exonuclease TatD (Yersinia pseudotuberculosis serotype O:3 (strain YPIII)).